A 118-amino-acid chain; its full sequence is Large ribosomal subunit protein bL20 (118 aa).

Belongs to the bacterial ribosomal protein bL20 family.

Binds directly to 23S ribosomal RNA and is necessary for the in vitro assembly process of the 50S ribosomal subunit. It is not involved in the protein synthesizing functions of that subunit. In Staphylococcus saprophyticus subsp. saprophyticus (strain ATCC 15305 / DSM 20229 / NCIMB 8711 / NCTC 7292 / S-41), this protein is Large ribosomal subunit protein bL20.